Reading from the N-terminus, the 495-residue chain is Alkaline protease 2 (495 aa).

A signal peptide spans 1–16 (MKGYLSLSILPLLVAA). Residues 17-136 (SPVVVDSIHN…IEKDSEVHTM (120 aa)) constitute a propeptide that is removed on maturation. In terms of domain architecture, Inhibitor I9 spans 43–136 (SYIVVFKKHV…IEKDSEVHTM (94 aa)). A Peptidase S8 domain is found at 146–452 (PWGLARISHR…GGSSNYTDII (307 aa)). Active-site charge relay system residues include aspartate 182 and histidine 214. Asparagine 284 carries an N-linked (GlcNAc...) asparagine glycan. The active-site Charge relay system is serine 380. N-linked (GlcNAc...) asparagine glycosylation is found at asparagine 447 and asparagine 460.

The protein belongs to the peptidase S8 family.

It carries out the reaction Hydrolysis of proteins with broad specificity, and of Bz-Arg-OEt &gt; Ac-Tyr-OEt. Does not hydrolyze peptide amides.. Functionally, alkaline protease that allows assimilation of proteinaceous substrates. Acts as a significant virulence factor in invasive aspergillosis. Required for regular sporulation. In Aspergillus fumigatus (strain CBS 144.89 / FGSC A1163 / CEA10) (Neosartorya fumigata), this protein is Alkaline protease 2 (alp2).